The primary structure comprises 368 residues: Galactoside 2-alpha-L-fucosyltransferase Sec1 (368 aa).

At 1-20 (MPSDSCLLSLTVLQRLRAIC) the chain is on the cytoplasmic side. The chain crosses the membrane as a helical; Signal-anchor for type II membrane protein span at residues 21–41 (PPLSTFYLFFVIFVVSTIFHC). Over 42 to 368 (HRRLGLVPAP…APKRHWGALL (327 aa)) the chain is Lumenal. N-linked (GlcNAc...) asparagine glycosylation is found at asparagine 195, asparagine 289, and asparagine 315.

This sequence belongs to the glycosyltransferase 11 family.

The protein localises to the golgi apparatus. It localises to the golgi stack membrane. It catalyses the reaction a ganglioside GM1 + GDP-beta-L-fucose = a ganglioside Fuc-GM1 + GDP + H(+). It participates in protein modification; protein glycosylation. In terms of biological role, catalyzes the transfer of alpha 1,2-linked fucose to ganglioside GM1 and galacto-N-biose. This is Galactoside 2-alpha-L-fucosyltransferase Sec1 from Mus musculus (Mouse).